Here is a 280-residue protein sequence, read N- to C-terminus: Bifunctional protein FolD (280 aa).

Residues Gly-165–Ser-167, Ser-190, and Ile-231 contribute to the NADP(+) site.

Belongs to the tetrahydrofolate dehydrogenase/cyclohydrolase family. As to quaternary structure, homodimer.

The catalysed reaction is (6R)-5,10-methylene-5,6,7,8-tetrahydrofolate + NADP(+) = (6R)-5,10-methenyltetrahydrofolate + NADPH. It catalyses the reaction (6R)-5,10-methenyltetrahydrofolate + H2O = (6R)-10-formyltetrahydrofolate + H(+). The protein operates within one-carbon metabolism; tetrahydrofolate interconversion. Functionally, catalyzes the oxidation of 5,10-methylenetetrahydrofolate to 5,10-methenyltetrahydrofolate and then the hydrolysis of 5,10-methenyltetrahydrofolate to 10-formyltetrahydrofolate. The protein is Bifunctional protein FolD of Moorella thermoacetica (strain ATCC 39073 / JCM 9320).